The sequence spans 140 residues: Nucleoside diphosphate kinase (140 aa).

Positions 11, 59, 87, 93, 104, and 114 each coordinate ATP. Residue His-117 is the Pros-phosphohistidine intermediate of the active site.

The protein belongs to the NDK family. As to quaternary structure, homotetramer. Mg(2+) serves as cofactor.

The protein localises to the cytoplasm. The enzyme catalyses a 2'-deoxyribonucleoside 5'-diphosphate + ATP = a 2'-deoxyribonucleoside 5'-triphosphate + ADP. The catalysed reaction is a ribonucleoside 5'-diphosphate + ATP = a ribonucleoside 5'-triphosphate + ADP. In terms of biological role, major role in the synthesis of nucleoside triphosphates other than ATP. The ATP gamma phosphate is transferred to the NDP beta phosphate via a ping-pong mechanism, using a phosphorylated active-site intermediate. The polypeptide is Nucleoside diphosphate kinase (Rhodovulum sulfidophilum (Rhodobacter sulfidophilus)).